A 151-amino-acid chain; its full sequence is MTIWVDADACPNVIKEILYRAAERMQLPLILVANQALRVPPSRFIRTLRVAAGFDVADNEIVRQCEAGDLVITADIPLAAEVLEKGAAALNPRGERYSDATIRERLTMRDFMDTLRASGVQTGGPNTLSPRDRQHFAAELDKWWLENQRKK.

The protein belongs to the UPF0178 family.

The protein is UPF0178 protein YaiI of Salmonella paratyphi B (strain ATCC BAA-1250 / SPB7).